A 468-amino-acid polypeptide reads, in one-letter code: 3-isopropylmalate dehydratase large subunit (468 aa).

Positions 347, 407, and 410 each coordinate [4Fe-4S] cluster. Positions 424 to 441 are enriched in polar residues; it reads SASSSNRNFKGRQGSPSG. The tract at residues 424-443 is disordered; the sequence is SASSSNRNFKGRQGSPSGRT.

The protein belongs to the aconitase/IPM isomerase family. LeuC type 1 subfamily. In terms of assembly, heterodimer of LeuC and LeuD. The cofactor is [4Fe-4S] cluster.

It carries out the reaction (2R,3S)-3-isopropylmalate = (2S)-2-isopropylmalate. Its pathway is amino-acid biosynthesis; L-leucine biosynthesis; L-leucine from 3-methyl-2-oxobutanoate: step 2/4. In terms of biological role, catalyzes the isomerization between 2-isopropylmalate and 3-isopropylmalate, via the formation of 2-isopropylmaleate. The chain is 3-isopropylmalate dehydratase large subunit from Prochlorococcus marinus (strain MIT 9215).